The primary structure comprises 369 residues: Probable dual-specificity RNA methyltransferase RlmN (369 aa).

The active-site Proton acceptor is glutamate 108. The region spanning 114–352 (YPDRATLCIS…CTVRDTKGQE (239 aa)) is the Radical SAM core domain. Cysteines 121 and 357 form a disulfide. [4Fe-4S] cluster-binding residues include cysteine 128, cysteine 132, and cysteine 135. S-adenosyl-L-methionine-binding positions include 178 to 179 (GE), serine 212, 235 to 237 (SLH), and asparagine 314. Cysteine 357 serves as the catalytic S-methylcysteine intermediate.

This sequence belongs to the radical SAM superfamily. RlmN family. The cofactor is [4Fe-4S] cluster.

It is found in the cytoplasm. The catalysed reaction is adenosine(2503) in 23S rRNA + 2 reduced [2Fe-2S]-[ferredoxin] + 2 S-adenosyl-L-methionine = 2-methyladenosine(2503) in 23S rRNA + 5'-deoxyadenosine + L-methionine + 2 oxidized [2Fe-2S]-[ferredoxin] + S-adenosyl-L-homocysteine. The enzyme catalyses adenosine(37) in tRNA + 2 reduced [2Fe-2S]-[ferredoxin] + 2 S-adenosyl-L-methionine = 2-methyladenosine(37) in tRNA + 5'-deoxyadenosine + L-methionine + 2 oxidized [2Fe-2S]-[ferredoxin] + S-adenosyl-L-homocysteine. Specifically methylates position 2 of adenine 2503 in 23S rRNA and position 2 of adenine 37 in tRNAs. This is Probable dual-specificity RNA methyltransferase RlmN from Corynebacterium efficiens (strain DSM 44549 / YS-314 / AJ 12310 / JCM 11189 / NBRC 100395).